The sequence spans 395 residues: Na(+)/H(+) antiporter NhaA (395 aa).

The next 12 helical transmembrane spans lie at 18–38 (AGGI…NSPL), 64–84 (LLMW…GLEV), 100–120 (IFPA…YWLV), 129–149 (GGWA…LVLL), 160–180 (FLLA…ALFF), 182–202 (HDLS…LILL), 205–225 (FKVS…VSVL), 226–246 (KSGV…PLKG), 266–286 (FLIL…GLGM), 295–315 (LGVT…FSYL), 333–353 (IFAV…LASL), and 368–388 (LGIL…LFVT).

This sequence belongs to the NhaA Na(+)/H(+) (TC 2.A.33) antiporter family.

The protein localises to the cell inner membrane. The enzyme catalyses Na(+)(in) + 2 H(+)(out) = Na(+)(out) + 2 H(+)(in). Its function is as follows. Na(+)/H(+) antiporter that extrudes sodium in exchange for external protons. The chain is Na(+)/H(+) antiporter NhaA from Histophilus somni (strain 129Pt) (Haemophilus somnus).